We begin with the raw amino-acid sequence, 323 residues long: Probable oxidoreductase patJ (323 aa).

The disordered stretch occupies residues aspartate 291 to glutamate 323. The segment covering glutamate 305 to arginine 316 has biased composition (basic and acidic residues).

Belongs to the oxidoreductase OpS7 family.

It is found in the vacuole lumen. The protein localises to the cytoplasmic vesicle lumen. The protein operates within mycotoxin biosynthesis; patulin biosynthesis. Its function is as follows. Probable oxidoreductase; part of the gene cluster that mediates the biosynthesis of patulin, an acetate-derived tetraketide mycotoxin produced by several fungal species that shows antimicrobial properties against several bacteria. PatJ acts with patO in the vacuole to convert gentisyl alcohol to isoepoxydon. The pathway begins with the synthesis of 6-methylsalicylic acid by the polyketide synthase (PKS) patK via condensation of acetate and malonate units. The 6-methylsalicylic acid decarboxylase patG then catalyzes the decarboxylation of 6-methylsalicylic acid to yield m-cresol (also known as 3-methylphenol). These first reactions occur in the cytosol. The intermediate m-cresol is then transported into the endoplasmic reticulum where the cytochrome P450 monooxygenase patH converts it to m-hydroxybenzyl alcohol, which is further converted to gentisyl alcohol by the cytochrome P450 monooxygenase patI. The oxidoreductases patJ and patO further convert gentisyl alcohol to isoepoxydon in the vacuole. PatN catalyzes then the transformation of isoepoxydon into phyllostine. The cluster protein patF is responsible for the conversion from phyllostine to neopatulin whereas the alcohol dehydrogenase patD converts neopatulin to E-ascladiol. The steps between isoepoxydon and E-ascladiol occur in the cytosol, and E-ascladiol is probably secreted to the extracellular space by one of the cluster-specific transporters patC or patM. Finally, the secreted patulin synthase patE catalyzes the conversion of E-ascladiol to patulin. The sequence is that of Probable oxidoreductase patJ from Aspergillus clavatus (strain ATCC 1007 / CBS 513.65 / DSM 816 / NCTC 3887 / NRRL 1 / QM 1276 / 107).